The primary structure comprises 745 residues: Isocitrate dehydrogenase [NADP] 2 (745 aa).

Residues Asn-87 and Ser-89 each contribute to the NADP(+) site. D-threo-isocitrate contacts are provided by Ser-134, Asn-137, Arg-141, Arg-147, and Lys-257. Position 352 (Asp-352) interacts with Mg(2+). Residues Tyr-422 and Arg-550 each coordinate D-threo-isocitrate. The Mg(2+) site is built by Asp-551 and Asp-555. NADP(+) contacts are provided by Gly-587, Ser-588, Ala-589, His-592, Arg-603, Asp-605, and Arg-652.

It belongs to the monomeric-type IDH family. May form homotrimers. Also forms homotetramers at low salt concentration, which are dissociated into homodimers, but not into monomers, at high salt concentration (1 M). The cofactor is Mg(2+).

The enzyme catalyses D-threo-isocitrate + NADP(+) = 2-oxoglutarate + CO2 + NADPH. In terms of biological role, catalyzes the oxidative decarboxylation of isocitrate to 2-oxoglutarate and carbon dioxide with the concomitant reduction of NADP(+). Cannot use NAD(+). This chain is Isocitrate dehydrogenase [NADP] 2, found in Mycobacterium tuberculosis (strain ATCC 25618 / H37Rv).